We begin with the raw amino-acid sequence, 240 residues long: Large ribosomal subunit protein uL2 (240 aa).

Positions 1–11 (MGKRLISQNRG) are enriched in polar residues. Disordered regions lie at residues 1–28 (MGKR…KGAV) and 206–240 (GGGR…TGRK). 2 stretches are compositionally biased toward basic residues: residues 13–28 (GTPK…KGAV) and 224–240 (SPGR…TGRK).

Belongs to the universal ribosomal protein uL2 family. Part of the 50S ribosomal subunit. Forms a bridge to the 30S subunit in the 70S ribosome.

Its function is as follows. One of the primary rRNA binding proteins. Required for association of the 30S and 50S subunits to form the 70S ribosome, for tRNA binding and peptide bond formation. It has been suggested to have peptidyltransferase activity; this is somewhat controversial. Makes several contacts with the 16S rRNA in the 70S ribosome. This is Large ribosomal subunit protein uL2 from Methanococcus maripaludis (strain C5 / ATCC BAA-1333).